The sequence spans 267 residues: Small ribosomal subunit protein uS3 (267 aa).

Residues 39–114 (IRKYLETNLK…RVNINIVEIR (76 aa)) enclose the KH type-2 domain. Positions 229 to 248 (ANNRGRGNNRGRGNSRQNGG) are enriched in low complexity. A disordered region spans residues 229–267 (ANNRGRGNNRGRGNSRQNGGRSRRPRQGQASTQGRGGNN).

It belongs to the universal ribosomal protein uS3 family. In terms of assembly, part of the 30S ribosomal subunit. Forms a tight complex with proteins S10 and S14.

Binds the lower part of the 30S subunit head. Binds mRNA in the 70S ribosome, positioning it for translation. In Oenococcus oeni (strain ATCC BAA-331 / PSU-1), this protein is Small ribosomal subunit protein uS3.